The primary structure comprises 124 residues: UPF0102 protein Mmc1_3298 (124 aa).

This sequence belongs to the UPF0102 family.

The sequence is that of UPF0102 protein Mmc1_3298 from Magnetococcus marinus (strain ATCC BAA-1437 / JCM 17883 / MC-1).